Reading from the N-terminus, the 686-residue chain is Kinesin light chain (686 aa).

Disordered stretches follow at residues 1-23 (MSGS…SQEQ) and 158-204 (KYDE…SVSA). Residues 20–160 (SQEQIITGTR…EYMNSIKKYD (141 aa)) are a coiled coil. 6 TPR repeats span residues 215 to 248 (LRTL…LEKT), 257 to 290 (ATML…REKT), 299 to 332 (AATL…REKV), 341 to 374 (AKQL…YEKK), 383 to 416 (AKTK…AHER), and 472 to 505 (TTTL…RRNA). Disordered stretches follow at residues 520 to 558 (QDLS…YEKT) and 586 to 686 (GYVE…SGNF). A compositionally biased stretch (polar residues) spans 675–686 (DNLSSRRQSGNF).

The protein belongs to the kinesin light chain family. In terms of assembly, oligomeric complex composed of two heavy chains and two light chains. Post-translationally, phosphorylation may modulate the process of mechanochemical coupling.

It is found in the cytoplasm. It localises to the cytoskeleton. Its function is as follows. Kinesin is a microtubule-associated force-producing protein that may play a role in organelle transport. The light chain may function in coupling of cargo to the heavy chain or in the modulation of its ATPase activity. This Strongylocentrotus purpuratus (Purple sea urchin) protein is Kinesin light chain.